The chain runs to 775 residues: Acylamino-acid-releasing enzyme 1 (775 aa).

Active-site charge relay system residues include Ser627, Asp718, and His750.

The protein belongs to the peptidase S9C family. As to quaternary structure, homotetramer.

Its subcellular location is the cytoplasm. It carries out the reaction Cleavage of an N-acetyl or N-formyl amino acid from the N-terminus of a polypeptide.. In terms of biological role, catalyzes the hydrolysis of the N-terminal peptide bond of an N-acetylated peptide to generate an N-acetylated amino acid and a peptide with a free N-terminus. The sequence is that of Acylamino-acid-releasing enzyme 1 from Oryza sativa subsp. japonica (Rice).